The following is a 588-amino-acid chain: Sulfite reductase [NADPH] hemoprotein beta-component (588 aa).

A compositionally biased stretch (basic and acidic residues) spans 1-10 (MSDKKQKGLE). Positions 1–20 (MSDKKQKGLEWQDNPLSDNE) are disordered. The [4Fe-4S] cluster site is built by Cys-443, Cys-449, Cys-488, and Cys-492. Cys-492 contacts siroheme.

It belongs to the nitrite and sulfite reductase 4Fe-4S domain family. In terms of assembly, alpha(8)-beta(8). The alpha component is a flavoprotein, the beta component is a hemoprotein. It depends on siroheme as a cofactor. The cofactor is [4Fe-4S] cluster.

It catalyses the reaction hydrogen sulfide + 3 NADP(+) + 3 H2O = sulfite + 3 NADPH + 4 H(+). It functions in the pathway sulfur metabolism; hydrogen sulfide biosynthesis; hydrogen sulfide from sulfite (NADPH route): step 1/1. In terms of biological role, component of the sulfite reductase complex that catalyzes the 6-electron reduction of sulfite to sulfide. This is one of several activities required for the biosynthesis of L-cysteine from sulfate. This chain is Sulfite reductase [NADPH] hemoprotein beta-component, found in Mannheimia succiniciproducens (strain KCTC 0769BP / MBEL55E).